The sequence spans 315 residues: Gamma-hemolysin component C (315 aa).

The N-terminal stretch at 1–29 (MLKNKILATTLSVSLLAPLANPLLENAKA) is a signal peptide.

This sequence belongs to the aerolysin family. Toxicity requires sequential binding and synergistic association of a class S and a class F component which form heterooligomeric complexes. HlgC (class S) associates with HlgB (class F) thus forming an CB toxin.

Toxin that seems to act by forming pores in the membrane of the cell. Has a hemolytic and a leucotoxic activity. This is Gamma-hemolysin component C (hlgC) from Staphylococcus aureus (strain Mu50 / ATCC 700699).